The sequence spans 779 residues: Probable ATP-dependent RNA helicase DHX40 (779 aa).

Positions Met1–Phe53 are disordered. Residues Arg13–Gly41 are compositionally biased toward basic and acidic residues. Positions Cys42–Phe53 are enriched in polar residues. The region spanning Ile63–Pro231 is the Helicase ATP-binding domain. ATP is bound at residue Gly76–Thr83. The DEAH box motif lies at Asp173 to His176. The region spanning Thr263–Ala442 is the Helicase C-terminal domain. Residues Ser737–Gly779 are disordered.

The protein belongs to the DEAD box helicase family. DEAH subfamily.

The catalysed reaction is ATP + H2O = ADP + phosphate + H(+). Its function is as follows. Probable ATP-dependent RNA helicase. The chain is Probable ATP-dependent RNA helicase DHX40 (DHX40) from Pongo abelii (Sumatran orangutan).